Consider the following 421-residue polypeptide: MFDKTQTIAAFDPEIWASIQNEGRRQEEHIELIASENYTSPLVMAAQGTKLTNKYAEGYPGKRYYGGCEYVDQSEALAIERAKQLFGADYANVQPHSGSQANTAVYAALCAPGDTVLGMSLAHGGHLTHGAKVNFSGKIYNAVQYGLNPETGLVDYDEVERLALEHKPKMIVAGFSAYSQVLDWQRFRDIADKVGAYLMVDMAHVAGLVAAGLYPNPVQIADVTTSTTHKTLRGPRGGIILAKANEEIEKKLNSAVFPGGQGGPLMHVIAAKAISFKEAMTPEYKDYQQQVVKNAKAMAATFIERGIKIVSGGTENHLMLVDLIGKPYSGKDADEALGKAHITVNKNAVPNDPRSPFVTSGIRVGTPAITTRGFKEAECIQLTNWICDIFAALEAGNADAVIEQVKTRVASLCKEFPVYAD.

(6S)-5,6,7,8-tetrahydrofolate-binding positions include Leu121 and 125 to 127 (GHL). Position 230 is an N6-(pyridoxal phosphate)lysine (Lys230). (6S)-5,6,7,8-tetrahydrofolate is bound at residue 355–357 (SPF).

This sequence belongs to the SHMT family. Homodimer. Requires pyridoxal 5'-phosphate as cofactor.

The protein localises to the cytoplasm. The enzyme catalyses (6R)-5,10-methylene-5,6,7,8-tetrahydrofolate + glycine + H2O = (6S)-5,6,7,8-tetrahydrofolate + L-serine. It functions in the pathway one-carbon metabolism; tetrahydrofolate interconversion. Its pathway is amino-acid biosynthesis; glycine biosynthesis; glycine from L-serine: step 1/1. Its function is as follows. Catalyzes the reversible interconversion of serine and glycine with tetrahydrofolate (THF) serving as the one-carbon carrier. This reaction serves as the major source of one-carbon groups required for the biosynthesis of purines, thymidylate, methionine, and other important biomolecules. Also exhibits THF-independent aldolase activity toward beta-hydroxyamino acids, producing glycine and aldehydes, via a retro-aldol mechanism. The protein is Serine hydroxymethyltransferase of Cellvibrio japonicus (strain Ueda107) (Pseudomonas fluorescens subsp. cellulosa).